A 106-amino-acid chain; its full sequence is Large ribosomal subunit protein bL21 (106 aa).

This sequence belongs to the bacterial ribosomal protein bL21 family. As to quaternary structure, part of the 50S ribosomal subunit. Contacts protein L20.

This protein binds to 23S rRNA in the presence of protein L20. The chain is Large ribosomal subunit protein bL21 from Xylella fastidiosa (strain 9a5c).